Reading from the N-terminus, the 313-residue chain is Potassium channel subfamily K member 6 (313 aa).

Residues 1 to 4 lie on the Cytoplasmic side of the membrane; it reads MRRG. The helical transmembrane segment at 5 to 25 threads the bilayer; it reads ALLAGALAAYAAYLVLGALLV. N-linked (GlcNAc...) asparagine glycans are attached at residues asparagine 79 and asparagine 85. Positions 90 to 115 form an intramembrane region, pore-forming; sequence AWDFASALFFASTLITTVGYGYTTPL. Residues threonine 106, valine 107, glycine 108, and tyrosine 109 each contribute to the K(+) site. The tract at residues 106–111 is selectivity filter 1; that stretch reads TVGYGY. Residues 121–141 form a helical membrane-spanning segment; it reads AFSIAFALLGVPTTMLLLTAS. The Cytoplasmic segment spans residues 142–172; sequence AQRLSLLLTHVPLSWLSMRWGWDPRRAACWH. A helical membrane pass occupies residues 173–193; that stretch reads LVALLGVVVTVCFLVPAVIFA. Residues 199–223 constitute an intramembrane region (pore-forming); sequence WSFLDAFYFCFISLSTIGLGDYVPG. Residues threonine 214, isoleucine 215, and glycine 216 each contribute to the K(+) site. The segment at 214 to 219 is selectivity filter 2; the sequence is TIGLGD. A helical membrane pass occupies residues 236 to 256; the sequence is VLVTVYLFLGLVAMVLVLQTF. At 257–313 the chain is on the cytoplasmic side; it reads RHVSDLHGLTELILLPPPCPASFNADEDDRVDILGPQPESHQQLSASSHTDYASIPR. Positions 282 to 290 match the Lysosomal targeting signal motif; it reads DEDDRVDIL. Residues 288 to 313 form a disordered region; that stretch reads DILGPQPESHQQLSASSHTDYASIPR. The segment covering 295 to 307 has biased composition (polar residues); that stretch reads ESHQQLSASSHTD. The Lysosomal targeting signal motif lies at 308-312; sequence YASIP.

It belongs to the two pore domain potassium channel (TC 1.A.1.8) family. As to quaternary structure, homodimer; disulfide-linked. Post-translationally, N-glycosylation is necessary for targeting to lysosomes. In terms of tissue distribution, widespread expression, detected in all tissues tested except for skeletal muscle. Strongest expression in placenta, pancreas, heart, colon and spleen, lower levels detected in peripheral blood leukocytes, lung, liver, kidney and thymus. Lowest expression detected in brain.

The protein resides in the late endosome membrane. It is found in the lysosome membrane. The enzyme catalyses K(+)(in) = K(+)(out). Functionally, k(+) channel that conducts outward rectifying currents at the membranes of the endolysosomal system. Active in lysosomes where it regulates lysosome numbers and size. In macrophages, enables K(+) efflux coupled to ATP-induced NLRP3 inflammasome activation upon bacterial infection. Cooperates with ATP-gated P2RX7 channels to activate NLRP3 inflammasome, with P2RX7 conducting Ca(2+) and Na(+) influx that sets the membrane potential for K(+) efflux. In terms of biological role, does not display channel activity. This chain is Potassium channel subfamily K member 6, found in Homo sapiens (Human).